The chain runs to 327 residues: uncharacterized protein (327 aa).

The S4 RNA-binding domain maps to 12–79 (KRLDEFLAKE…LKKELDLEIE (68 aa)). Residue Asp-136 is part of the active site.

This sequence belongs to the pseudouridine synthase RluA family.

The enzyme catalyses a uridine in RNA = a pseudouridine in RNA. This is an uncharacterized protein from Helicobacter pylori (strain ATCC 700392 / 26695) (Campylobacter pylori).